We begin with the raw amino-acid sequence, 194 residues long: 22 kDa relaxation protein (194 aa).

Functionally, this protein is probably required for relaxation complex formation. The protein is 22 kDa relaxation protein of Salmonella typhimurium.